Here is a 601-residue protein sequence, read N- to C-terminus: Elongation factor 4 (601 aa).

Residues 7–189 (DRIRNFSIIA…ALVTRLPAPK (183 aa)) form the tr-type G domain. GTP contacts are provided by residues 19 to 24 (DHGKST) and 136 to 139 (NKVD).

The protein belongs to the TRAFAC class translation factor GTPase superfamily. Classic translation factor GTPase family. LepA subfamily.

The protein localises to the cell inner membrane. It carries out the reaction GTP + H2O = GDP + phosphate + H(+). Required for accurate and efficient protein synthesis under certain stress conditions. May act as a fidelity factor of the translation reaction, by catalyzing a one-codon backward translocation of tRNAs on improperly translocated ribosomes. Back-translocation proceeds from a post-translocation (POST) complex to a pre-translocation (PRE) complex, thus giving elongation factor G a second chance to translocate the tRNAs correctly. Binds to ribosomes in a GTP-dependent manner. This chain is Elongation factor 4, found in Granulibacter bethesdensis (strain ATCC BAA-1260 / CGDNIH1).